The sequence spans 419 residues: CinA-like protein (419 aa).

This sequence belongs to the CinA family.

This chain is CinA-like protein, found in Synechococcus sp. (strain CC9902).